The following is a 24-amino-acid chain: Brevinin-1E (24 aa).

Cysteine 18 and cysteine 24 are oxidised to a cystine.

In terms of tissue distribution, expressed by the skin glands.

The protein localises to the secreted. Functionally, antimicrobial peptide. Stimulates insulin release by BRIN-BD11 cells in vitro. In Pelophylax saharicus (Sahara frog), this protein is Brevinin-1E.